The sequence spans 298 residues: Thymidylate synthase (298 aa).

Residues arginine 25 and 159-160 contribute to the dUMP site; that span reads RR. The Nucleophile role is filled by cysteine 179. Residues 200 to 203, asparagine 211, and 241 to 243 each bind dUMP; these read RSCD and HLY. Aspartate 203 serves as a coordination point for (6R)-5,10-methylene-5,6,7,8-tetrahydrofolate. Alanine 297 contributes to the (6R)-5,10-methylene-5,6,7,8-tetrahydrofolate binding site.

This sequence belongs to the thymidylate synthase family. Bacterial-type ThyA subfamily. As to quaternary structure, homodimer.

The protein resides in the cytoplasm. It carries out the reaction dUMP + (6R)-5,10-methylene-5,6,7,8-tetrahydrofolate = 7,8-dihydrofolate + dTMP. It functions in the pathway pyrimidine metabolism; dTTP biosynthesis. In terms of biological role, catalyzes the reductive methylation of 2'-deoxyuridine-5'-monophosphate (dUMP) to 2'-deoxythymidine-5'-monophosphate (dTMP) while utilizing 5,10-methylenetetrahydrofolate (mTHF) as the methyl donor and reductant in the reaction, yielding dihydrofolate (DHF) as a by-product. This enzymatic reaction provides an intracellular de novo source of dTMP, an essential precursor for DNA biosynthesis. This chain is Thymidylate synthase, found in Rhodopseudomonas palustris (strain BisA53).